We begin with the raw amino-acid sequence, 313 residues long: Malate dehydrogenase (313 aa).

NAD(+)-binding positions include 11–16 (GAGSIG) and D35. 2 residues coordinate substrate: R84 and R90. NAD(+) is bound by residues N97 and 120–122 (VTN). Substrate is bound by residues N122 and R153. The active-site Proton acceptor is H177.

This sequence belongs to the LDH/MDH superfamily. MDH type 3 family.

It carries out the reaction (S)-malate + NAD(+) = oxaloacetate + NADH + H(+). In terms of biological role, catalyzes the reversible oxidation of malate to oxaloacetate. This chain is Malate dehydrogenase, found in Ehrlichia chaffeensis (strain ATCC CRL-10679 / Arkansas).